The following is a 351-amino-acid chain: MSSLLIDLKGKELEQEEVELLSHPLVAGLILFTRNFENREQIQELIRSVRQRVKKPLLITVDQEGGRVQRFRDGFTMLPSMQAFQETLSATEQVSFAKEAGWQMAAEMIALDIDLSFAPVLDLGHECRAIGDRSFSSDVKSAVNLATAFIDGMHQAGMASTGKHFPGHGHVLADSHLETPYDDRTKEEIFSGDLQPFQQLISQNKLDAIMPAHVIYSQCDSQPASGSKYWLKEILRKKLNFQGTIFSDDLGMKGAGVMGNFVERSKKALNAGCDLLLLCNEREGVIQVLDNLKLTENQPHFMARQARLQSLFKRRVINWNDLISDQRWRLNYQKLADIQSRWLDIQAAKND.

Substrate is bound by residues D62, R70, R133, and 163-164 (KH). The active-site Proton donor/acceptor is H176. D248 (nucleophile) is an active-site residue.

Belongs to the glycosyl hydrolase 3 family. NagZ subfamily. In terms of assembly, monomer.

The protein resides in the cytoplasm. It catalyses the reaction Hydrolysis of terminal non-reducing N-acetyl-D-hexosamine residues in N-acetyl-beta-D-hexosaminides.. It functions in the pathway cell wall biogenesis; peptidoglycan recycling. In terms of biological role, plays a role in peptidoglycan recycling by cleaving the terminal beta-1,4-linked N-acetylglucosamine (GlcNAc) from peptide-linked peptidoglycan fragments, giving rise to free GlcNAc, anhydro-N-acetylmuramic acid and anhydro-N-acetylmuramic acid-linked peptides. The protein is Beta-hexosaminidase of Haemophilus influenzae (strain ATCC 51907 / DSM 11121 / KW20 / Rd).